Reading from the N-terminus, the 174-residue chain is Gamma-crystallin A (174 aa).

2 Beta/gamma crystallin 'Greek key' domains span residues 2-40 (GKIT…RVDS) and 41-83 (GCWM…RIIP). The tract at residues 84-87 (HTSS) is connecting peptide. 2 consecutive Beta/gamma crystallin 'Greek key' domains span residues 88-128 (HKLR…HVLE) and 129-171 (GCWV…RRVT).

This sequence belongs to the beta/gamma-crystallin family. Monomer.

Crystallins are the dominant structural components of the vertebrate eye lens. The protein is Gamma-crystallin A (CRYGA) of Homo sapiens (Human).